The primary structure comprises 337 residues: Ketol-acid reductoisomerase (NADP(+)) (337 aa).

In terms of domain architecture, KARI N-terminal Rossmann spans 1–181 (MKIYYEHDAD…GAARAGVIAT (181 aa)). NADP(+) is bound by residues 24–27 (FGSQ), Arg47, Ser50, Ser52, and 82–85 (DEKQ). The active site involves His107. Gly133 serves as a coordination point for NADP(+). Positions 182–328 (TFKDETETDL…SRLRAMMPFL (147 aa)) constitute a KARI C-terminal knotted domain. The Mg(2+) site is built by Asp190, Glu194, Glu226, and Glu230. Ser251 contacts substrate.

This sequence belongs to the ketol-acid reductoisomerase family. Mg(2+) serves as cofactor.

The catalysed reaction is (2R)-2,3-dihydroxy-3-methylbutanoate + NADP(+) = (2S)-2-acetolactate + NADPH + H(+). It catalyses the reaction (2R,3R)-2,3-dihydroxy-3-methylpentanoate + NADP(+) = (S)-2-ethyl-2-hydroxy-3-oxobutanoate + NADPH + H(+). The protein operates within amino-acid biosynthesis; L-isoleucine biosynthesis; L-isoleucine from 2-oxobutanoate: step 2/4. It functions in the pathway amino-acid biosynthesis; L-valine biosynthesis; L-valine from pyruvate: step 2/4. Its function is as follows. Involved in the biosynthesis of branched-chain amino acids (BCAA). Catalyzes an alkyl-migration followed by a ketol-acid reduction of (S)-2-acetolactate (S2AL) to yield (R)-2,3-dihydroxy-isovalerate. In the isomerase reaction, S2AL is rearranged via a Mg-dependent methyl migration to produce 3-hydroxy-3-methyl-2-ketobutyrate (HMKB). In the reductase reaction, this 2-ketoacid undergoes a metal-dependent reduction by NADPH to yield (R)-2,3-dihydroxy-isovalerate. The sequence is that of Ketol-acid reductoisomerase (NADP(+)) from Thermus thermophilus (strain ATCC BAA-163 / DSM 7039 / HB27).